Reading from the N-terminus, the 290-residue chain is MDKLIKTISASGAFRAYVLDCTETVRYAQERHHTLSSSTVALGRTLIANQILAANQKGDSKVTVKVIGDSSFGHIISVADTKGHVKGYIQNPGVDIKKTATGEVLVGPFMGQGHFVTITDYGTGNPYTSTTPLITGEIGEDLAYYLTESEQTPSAVGLNVLLDQEDKVKVAGGFMLQVLPGASVEEISHYEKRIQEMPAISTLLASENHIDALLAAIYGEEPYKRLAEEQLSFQCDCSRERFASALMSLPKADLLTMLNEDKGAEIVCQFCGTKYQFDQTDLEVLINDKA.

2 disulfide bridges follow: C235–C237 and C268–C271.

It belongs to the HSP33 family. Under oxidizing conditions two disulfide bonds are formed involving the reactive cysteines. Under reducing conditions zinc is bound to the reactive cysteines and the protein is inactive.

It is found in the cytoplasm. In terms of biological role, redox regulated molecular chaperone. Protects both thermally unfolding and oxidatively damaged proteins from irreversible aggregation. Plays an important role in the bacterial defense system toward oxidative stress. This is 33 kDa chaperonin from Streptococcus equi subsp. equi (strain 4047).